We begin with the raw amino-acid sequence, 135 residues long: Germinal center-associated signaling and motility-like protein (135 aa).

The segment at 1 to 68 is disordered; sequence MGNYLLRKLS…ENGSGSEEVC (68 aa). The segment covering 22-48 has biased composition (basic and acidic residues); that stretch reads GNPDEERKRQEMTTFERKLQDQDKKSQ. Positions 26–50 form a coiled coil; the sequence is EERKRQEMTTFERKLQDQDKKSQEV. Over residues 51–66 the composition is skewed to low complexity; that stretch reads SSTSNQENENGSGSEE.

This chain is Germinal center-associated signaling and motility-like protein (GCSAML), found in Homo sapiens (Human).